The primary structure comprises 994 residues: cGMP-dependent protein kinase (994 aa).

The interval 1-162 is disordered; sequence MGACISKNSS…QDDSHTEEEK (162 aa). Gly-2 carries the N-myristoyl glycine lipid modification. Cys-4 is lipidated: S-palmitoyl cysteine. Low complexity-rich tracts occupy residues 9 to 22 and 33 to 46; these read SSAR…LSAS and GAAG…GAAE. Basic and acidic residues-rich tracts occupy residues 65–80 and 133–162; these read ELER…REEP and EGPK…EEEK. CNMP-binding domain regions lie at residues 189 to 305, 308 to 407, 463 to 539, and 561 to 660; these read VCSS…FLAS, FFEM…RVLG, GIRF…ATLG, and IFRY…NEII. Gly-253, Glu-254, Ala-256, Arg-263, and Ser-264 together coordinate 3',5'-cyclic GMP. Arg-616, Gly-625, Glu-626, Ala-628, Arg-635, and Thr-636 together coordinate 3',5'-cyclic GMP. Residues 684–941 form the Protein kinase domain; that stretch reads LQVVRVVGRG…YKDIKEHAFF (258 aa). ATP contacts are provided by residues 690-698 and Lys-713; that span reads VGRGTFGTV. Asp-807 serves as the catalytic Proton acceptor. Positions 942–994 constitute an AGC-kinase C-terminal domain; sequence GDFDWDKLAGRGLPPPLAPKGETYAEDTEQSSFELDEDDTIVLEDEYDWDKDF. The interval 954-976 is disordered; it reads LPPPLAPKGETYAEDTEQSSFEL. Residues 965–976 are compositionally biased toward acidic residues; sequence YAEDTEQSSFEL.

Belongs to the protein kinase superfamily. AGC Ser/Thr protein kinase family. cGMP subfamily. The cofactor is Mg(2+).

The protein resides in the cytoplasm. It localises to the membrane. The protein localises to the cell membrane. The enzyme catalyses L-seryl-[protein] + ATP = O-phospho-L-seryl-[protein] + ADP + H(+). The catalysed reaction is L-threonyl-[protein] + ATP = O-phospho-L-threonyl-[protein] + ADP + H(+). With respect to regulation, activated by cGMP. The cGMP-binding domains acts cooperatively to activate PKG. Inhibited by the antiparasitic small molecule 4-[2-(4-fluorophenyl)-5-(1-methylpiperidine-4-yl)-1Hpyrrol- 3-yl]pyridine (compound 1). Functionally, serine/threonine protein kinase which acts as a downstream effector of the second messenger cGMP. Plays an essential role in tachyzoite invasion of and egress from host cells. During invasion of host cells, regulates the apico-basal flux of F-actin probably via Ca(2+)-mediated activation of CDPK1. In tachyzoites, required for microneme secretion. Required for tachyzoite gliding motility. In terms of biological role, plays an essential role in parasite invasion of and egress from host cells, and microneme secretion. Dispensable for parasite invasion of and egress from host cells, and microneme secretion. In Toxoplasma gondii, this protein is cGMP-dependent protein kinase.